A 247-amino-acid polypeptide reads, in one-letter code: Cell division protein ZapD (247 aa).

The protein belongs to the ZapD family. Interacts with FtsZ.

Its subcellular location is the cytoplasm. Functionally, cell division factor that enhances FtsZ-ring assembly. Directly interacts with FtsZ and promotes bundling of FtsZ protofilaments, with a reduction in FtsZ GTPase activity. The protein is Cell division protein ZapD of Salmonella arizonae (strain ATCC BAA-731 / CDC346-86 / RSK2980).